Reading from the N-terminus, the 492-residue chain is Protein KOKOPELLI (492 aa).

Disordered regions lie at residues 218–354 (VTSP…RNVM) and 394–426 (SKFH…QHQG). Acidic residues predominate over residues 256 to 270 (QETETFDDDSSETEA). Residues 287 to 305 (STSQEYSGETGSSSGSEWE) show a composition bias toward low complexity. Over residues 317 to 336 (ESSYPPQNDDSVSEVSTSPP) the composition is skewed to polar residues. 2 stretches are compositionally biased toward basic and acidic residues: residues 337-348 (HTDRDTSREPGK) and 403-412 (KSKERKRPMS).

In terms of tissue distribution, mostly expressed in pollen and open flowers and, to a lower extent, in closed flowers.

Positively regulates reproductive function by facilitating male gametophyte formation and double fertilization. This Arabidopsis thaliana (Mouse-ear cress) protein is Protein KOKOPELLI.